The primary structure comprises 329 residues: Acetyl-coenzyme A carboxylase carboxyl transferase subunit alpha (329 aa).

In terms of domain architecture, CoA carboxyltransferase C-terminal spans 40–294 (QLETLAARRR…KNALEKHLSE (255 aa)).

Belongs to the AccA family. As to quaternary structure, acetyl-CoA carboxylase is a heterohexamer composed of biotin carboxyl carrier protein (AccB), biotin carboxylase (AccC) and two subunits each of ACCase subunit alpha (AccA) and ACCase subunit beta (AccD).

It localises to the cytoplasm. The enzyme catalyses N(6)-carboxybiotinyl-L-lysyl-[protein] + acetyl-CoA = N(6)-biotinyl-L-lysyl-[protein] + malonyl-CoA. The protein operates within lipid metabolism; malonyl-CoA biosynthesis; malonyl-CoA from acetyl-CoA: step 1/1. Its function is as follows. Component of the acetyl coenzyme A carboxylase (ACC) complex. First, biotin carboxylase catalyzes the carboxylation of biotin on its carrier protein (BCCP) and then the CO(2) group is transferred by the carboxyltransferase to acetyl-CoA to form malonyl-CoA. In Prochlorococcus marinus (strain NATL1A), this protein is Acetyl-coenzyme A carboxylase carboxyl transferase subunit alpha.